The following is a 285-amino-acid chain: Glutamate racemase (285 aa).

Residues 28–29 (DS) and 60–61 (YG) each bind substrate. Cysteine 92 (proton donor/acceptor) is an active-site residue. 93 to 94 (NT) lines the substrate pocket. Cysteine 204 serves as the catalytic Proton donor/acceptor. 205 to 206 (TH) serves as a coordination point for substrate.

The protein belongs to the aspartate/glutamate racemases family.

It catalyses the reaction L-glutamate = D-glutamate. The protein operates within cell wall biogenesis; peptidoglycan biosynthesis. In terms of biological role, provides the (R)-glutamate required for cell wall biosynthesis. The polypeptide is Glutamate racemase (Shigella flexneri serotype 5b (strain 8401)).